The sequence spans 263 residues: Acyl-[acyl-carrier-protein]--UDP-N-acetylglucosamine O-acyltransferase (263 aa).

This sequence belongs to the transferase hexapeptide repeat family. LpxA subfamily. Homotrimer.

The protein localises to the cytoplasm. The catalysed reaction is a (3R)-hydroxyacyl-[ACP] + UDP-N-acetyl-alpha-D-glucosamine = a UDP-3-O-[(3R)-3-hydroxyacyl]-N-acetyl-alpha-D-glucosamine + holo-[ACP]. It functions in the pathway glycolipid biosynthesis; lipid IV(A) biosynthesis; lipid IV(A) from (3R)-3-hydroxytetradecanoyl-[acyl-carrier-protein] and UDP-N-acetyl-alpha-D-glucosamine: step 1/6. Its function is as follows. Involved in the biosynthesis of lipid A, a phosphorylated glycolipid that anchors the lipopolysaccharide to the outer membrane of the cell. The sequence is that of Acyl-[acyl-carrier-protein]--UDP-N-acetylglucosamine O-acyltransferase from Campylobacter jejuni subsp. jejuni serotype O:2 (strain ATCC 700819 / NCTC 11168).